Here is a 325-residue protein sequence, read N- to C-terminus: Tetraacyldisaccharide 4'-kinase (325 aa).

55 to 62 provides a ligand contact to ATP; it reads TAGGNGKT.

It belongs to the LpxK family.

The enzyme catalyses a lipid A disaccharide + ATP = a lipid IVA + ADP + H(+). It functions in the pathway glycolipid biosynthesis; lipid IV(A) biosynthesis; lipid IV(A) from (3R)-3-hydroxytetradecanoyl-[acyl-carrier-protein] and UDP-N-acetyl-alpha-D-glucosamine: step 6/6. In terms of biological role, transfers the gamma-phosphate of ATP to the 4'-position of a tetraacyldisaccharide 1-phosphate intermediate (termed DS-1-P) to form tetraacyldisaccharide 1,4'-bis-phosphate (lipid IVA). In Enterobacter sp. (strain 638), this protein is Tetraacyldisaccharide 4'-kinase.